Here is a 465-residue protein sequence, read N- to C-terminus: ATP synthase subunit beta (465 aa).

151–158 (GGAGVGKT) serves as a coordination point for ATP.

Belongs to the ATPase alpha/beta chains family. As to quaternary structure, F-type ATPases have 2 components, CF(1) - the catalytic core - and CF(0) - the membrane proton channel. CF(1) has five subunits: alpha(3), beta(3), gamma(1), delta(1), epsilon(1). CF(0) has four main subunits: a(1), b(1), b'(1) and c(9-12).

It localises to the cell inner membrane. It carries out the reaction ATP + H2O + 4 H(+)(in) = ADP + phosphate + 5 H(+)(out). Functionally, produces ATP from ADP in the presence of a proton gradient across the membrane. The catalytic sites are hosted primarily by the beta subunits. In Chloroherpeton thalassium (strain ATCC 35110 / GB-78), this protein is ATP synthase subunit beta.